The primary structure comprises 205 residues: Holliday junction branch migration complex subunit RuvA (205 aa).

A domain I region spans residues 1–67; it reads MITSIFGKVT…QIIEEAFAFN (67 aa). The segment at 68–146 is domain II; sequence TLEEKEWFCR…NNKNIKGVQV (79 aa). The interval 147–150 is flexible linker; sequence ADGY. The interval 150 to 205 is domain III; the sequence is YDELFETLKSLGYKQQEIQDALKMIEVKPDFDISQLVAEVIKLMSFKNNEITNKTA.

This sequence belongs to the RuvA family. As to quaternary structure, homotetramer. Forms an RuvA(8)-RuvB(12)-Holliday junction (HJ) complex. HJ DNA is sandwiched between 2 RuvA tetramers; dsDNA enters through RuvA and exits via RuvB. An RuvB hexamer assembles on each DNA strand where it exits the tetramer. Each RuvB hexamer is contacted by two RuvA subunits (via domain III) on 2 adjacent RuvB subunits; this complex drives branch migration. In the full resolvosome a probable DNA-RuvA(4)-RuvB(12)-RuvC(2) complex forms which resolves the HJ.

It localises to the cytoplasm. Functionally, the RuvA-RuvB-RuvC complex processes Holliday junction (HJ) DNA during genetic recombination and DNA repair, while the RuvA-RuvB complex plays an important role in the rescue of blocked DNA replication forks via replication fork reversal (RFR). RuvA specifically binds to HJ cruciform DNA, conferring on it an open structure. The RuvB hexamer acts as an ATP-dependent pump, pulling dsDNA into and through the RuvAB complex. HJ branch migration allows RuvC to scan DNA until it finds its consensus sequence, where it cleaves and resolves the cruciform DNA. The polypeptide is Holliday junction branch migration complex subunit RuvA (Mycoplasma genitalium (strain ATCC 33530 / DSM 19775 / NCTC 10195 / G37) (Mycoplasmoides genitalium)).